We begin with the raw amino-acid sequence, 176 residues long: RNA pyrophosphohydrolase (176 aa).

In terms of domain architecture, Nudix hydrolase spans 6-149 (GYRPNVGIVI…KRDVYRRVMK (144 aa)). Positions 38-59 (GGINPGESAEQAMYRELFEEVG) match the Nudix box motif.

Belongs to the Nudix hydrolase family. RppH subfamily. It depends on a divalent metal cation as a cofactor.

Its function is as follows. Accelerates the degradation of transcripts by removing pyrophosphate from the 5'-end of triphosphorylated RNA, leading to a more labile monophosphorylated state that can stimulate subsequent ribonuclease cleavage. In Escherichia fergusonii (strain ATCC 35469 / DSM 13698 / CCUG 18766 / IAM 14443 / JCM 21226 / LMG 7866 / NBRC 102419 / NCTC 12128 / CDC 0568-73), this protein is RNA pyrophosphohydrolase.